The following is a 471-amino-acid chain: Glutamate--tRNA ligase (471 aa).

The 'HIGH' region motif lies at 9 to 19 (PSPTGFLHVGG). Zn(2+) is bound by residues cysteine 98, cysteine 100, cysteine 125, and aspartate 127. The 'KMSKS' region motif lies at 237-241 (KLSKR). Lysine 240 lines the ATP pocket.

It belongs to the class-I aminoacyl-tRNA synthetase family. Glutamate--tRNA ligase type 1 subfamily. As to quaternary structure, monomer. Requires Zn(2+) as cofactor.

Its subcellular location is the cytoplasm. The enzyme catalyses tRNA(Glu) + L-glutamate + ATP = L-glutamyl-tRNA(Glu) + AMP + diphosphate. In terms of biological role, catalyzes the attachment of glutamate to tRNA(Glu) in a two-step reaction: glutamate is first activated by ATP to form Glu-AMP and then transferred to the acceptor end of tRNA(Glu). The chain is Glutamate--tRNA ligase from Aeromonas hydrophila subsp. hydrophila (strain ATCC 7966 / DSM 30187 / BCRC 13018 / CCUG 14551 / JCM 1027 / KCTC 2358 / NCIMB 9240 / NCTC 8049).